We begin with the raw amino-acid sequence, 317 residues long: Ribosomal RNA small subunit methyltransferase H (317 aa).

S-adenosyl-L-methionine-binding positions include 30-32 (GGH), Asp50, Tyr74, Asp95, and Gln102.

It belongs to the methyltransferase superfamily. RsmH family.

It is found in the cytoplasm. The enzyme catalyses cytidine(1402) in 16S rRNA + S-adenosyl-L-methionine = N(4)-methylcytidine(1402) in 16S rRNA + S-adenosyl-L-homocysteine + H(+). Functionally, specifically methylates the N4 position of cytidine in position 1402 (C1402) of 16S rRNA. The protein is Ribosomal RNA small subunit methyltransferase H of Nitrosomonas europaea (strain ATCC 19718 / CIP 103999 / KCTC 2705 / NBRC 14298).